Reading from the N-terminus, the 376-residue chain is Pyrimidine monooxygenase RutA (376 aa).

Residues isoleucine 61–lysine 62, asparagine 127, glutamate 136, arginine 152–tyrosine 153, and serine 202 contribute to the FMN site.

It belongs to the NtaA/SnaA/DszA monooxygenase family. RutA subfamily.

It carries out the reaction uracil + FMNH2 + NADH + O2 = (Z)-3-ureidoacrylate + FMN + NAD(+) + H2O + H(+). The enzyme catalyses thymine + FMNH2 + NADH + O2 = (Z)-2-methylureidoacrylate + FMN + NAD(+) + H2O + H(+). Catalyzes the pyrimidine ring opening between N-3 and C-4 by an unusual flavin hydroperoxide-catalyzed mechanism, adding oxygen atoms in the process to yield ureidoacrylate peracid, that immediately reacts with FMN forming ureidoacrylate and FMN-N(5)-oxide. The FMN-N(5)-oxide reacts spontaneously with NADH to produce FMN. Requires the flavin reductase RutF to regenerate FMN in vivo. The polypeptide is Pyrimidine monooxygenase RutA (Methylorubrum populi (strain ATCC BAA-705 / NCIMB 13946 / BJ001) (Methylobacterium populi)).